We begin with the raw amino-acid sequence, 233 residues long: Proteasome subunit beta type-6 (233 aa).

Residues M1–G12 constitute a propeptide, removed in mature form. Residue T13 is the Nucleophile of the active site.

Belongs to the peptidase T1B family. As to quaternary structure, component of the 20S core complex of the 26S proteasome. The 26S proteasome is composed of a core protease (CP), known as the 20S proteasome, capped at one or both ends by the 19S regulatory particle (RP/PA700). The 20S proteasome core is composed of 28 subunits that are arranged in four stacked rings, resulting in a barrel-shaped structure. The two end rings are each formed by seven alpha subunits, and the two central rings are each formed by seven beta subunits. The catalytic chamber with the active sites is on the inside of the barrel.

The protein localises to the cytoplasm. It localises to the nucleus. It carries out the reaction Cleavage of peptide bonds with very broad specificity.. Its function is as follows. The proteasome is a multicatalytic proteinase complex which is characterized by its ability to cleave peptides with Arg, Phe, Tyr, Leu, and Glu adjacent to the leaving group at neutral or slightly basic pH. The proteasome has an ATP-dependent proteolytic activity. The polypeptide is Proteasome subunit beta type-6 (PBA1) (Arabidopsis thaliana (Mouse-ear cress)).